The sequence spans 396 residues: Elongation factor Tu (396 aa).

Positions 10-205 (KPHVNIGTIG…AVDESIPDPV (196 aa)) constitute a tr-type G domain. The interval 19-26 (GHVDHGKT) is G1. Residue 19-26 (GHVDHGKT) participates in GTP binding. Residue Thr-26 coordinates Mg(2+). A G2 region spans residues 62–66 (GITIN). The segment at 83 to 86 (DAPG) is G3. GTP contacts are provided by residues 83–87 (DAPGH) and 138–141 (NKAD). The interval 138–141 (NKAD) is G4. The G5 stretch occupies residues 175 to 177 (SAL).

It belongs to the TRAFAC class translation factor GTPase superfamily. Classic translation factor GTPase family. EF-Tu/EF-1A subfamily. Monomer.

The protein resides in the cytoplasm. The enzyme catalyses GTP + H2O = GDP + phosphate + H(+). In terms of biological role, GTP hydrolase that promotes the GTP-dependent binding of aminoacyl-tRNA to the A-site of ribosomes during protein biosynthesis. In Rhodococcus erythropolis (strain PR4 / NBRC 100887), this protein is Elongation factor Tu.